A 416-amino-acid polypeptide reads, in one-letter code: Serine hydroxymethyltransferase (416 aa).

(6S)-5,6,7,8-tetrahydrofolate-binding positions include leucine 118 and 122–124; that span reads GHL. An N6-(pyridoxal phosphate)lysine modification is found at lysine 226. 350 to 352 contacts (6S)-5,6,7,8-tetrahydrofolate; the sequence is SPF.

It belongs to the SHMT family. As to quaternary structure, homodimer. The cofactor is pyridoxal 5'-phosphate.

It is found in the cytoplasm. It catalyses the reaction (6R)-5,10-methylene-5,6,7,8-tetrahydrofolate + glycine + H2O = (6S)-5,6,7,8-tetrahydrofolate + L-serine. Its pathway is one-carbon metabolism; tetrahydrofolate interconversion. The protein operates within amino-acid biosynthesis; glycine biosynthesis; glycine from L-serine: step 1/1. In terms of biological role, catalyzes the reversible interconversion of serine and glycine with tetrahydrofolate (THF) serving as the one-carbon carrier. This reaction serves as the major source of one-carbon groups required for the biosynthesis of purines, thymidylate, methionine, and other important biomolecules. Also exhibits THF-independent aldolase activity toward beta-hydroxyamino acids, producing glycine and aldehydes, via a retro-aldol mechanism. In Sulfurovum sp. (strain NBC37-1), this protein is Serine hydroxymethyltransferase.